Reading from the N-terminus, the 398-residue chain is Serine/threonine-protein kinase UL13 (398 aa).

The segment covering 1 to 10 has biased composition (gly residues); it reads MAAGGGGGGV. The interval 1–44 is disordered; it reads MAAGGGGGGVSRAALARPPIHRGTSAPGGAIAAAGGDGDGDEAS. Residues 80-398 enclose the Protein kinase domain; that stretch reads TGDPVAVGAG…GGARFAELAA (319 aa). Residues 86–94 and Lys-103 contribute to the ATP site; that span reads VGAGSYGSV. Asp-194 serves as the catalytic Proton acceptor.

It belongs to the protein kinase superfamily. Ser/Thr protein kinase family. Autophosphorylated.

The protein resides in the virion tegument. Its subcellular location is the host nucleus. It localises to the host cytoplasm. It is found in the host endoplasmic reticulum. The enzyme catalyses L-seryl-[protein] + ATP = O-phospho-L-seryl-[protein] + ADP + H(+). It carries out the reaction L-threonyl-[protein] + ATP = O-phospho-L-threonyl-[protein] + ADP + H(+). Its function is as follows. Multifunctional serine/threonine kinase that plays a role in several processes including egress of virus particles from the nucleus, modulation of the actin cytoskeleton and regulation of viral and cellular gene expression. Regulates the nuclear localization of viral envelopment factors UL34 and UL31, by phosphorylating the US3 kinase, indicating a role in nuclear egress. Disrupts host nuclear lamins, including LMNA and LMNB1. Phosphorylates the viral Fc receptor composed of glycoproteins E (gE) and I (gI). Phosphorylation of glycoprotein E (gE) by UL13 alters its subcellular localization, from the host early endosome to the plasma membrane. Participates in the transcriptional regulation of cellular and viral mRNAs mainly by phosphorylating the viral transcriptional regulator ICP22. Functions as an antagonist of the host RLR-mediated antiviral responses via suppression of the transcription of cytosolic receptors RIGI and IFIH1. Facilitates immune evasion also by recruiting host RNF5 to initiate the 'Lys-27'-/'Lys-29'-linked polyubiquitination of STING1; leading to its degradation. Blocks host IFN-beta transactivation mediated by the cGAS-STING pathway by phosphorylating host IRF3. In turn, IRF3 binding to the IRF3-responsive promoters and downstream interferon stimulated genes/ISG expression are greatly impaired. Induces the activation of the host DNA damage response via H2AX phosphorylation to improve efficient viral replication and progeny production. This Suid herpesvirus 1 (strain NIA-3) (SuHV-1) protein is Serine/threonine-protein kinase UL13 (UL13).